The chain runs to 194 residues: Translation machinery-associated protein 22 (194 aa).

An SUI1 domain is found at 102 to 173 (VQIKRVERNK…DVQEWLLELY (72 aa)).

The protein belongs to the DENR family. In terms of assembly, interacts with the 40S ribosomal subunit.

It localises to the cytoplasm. In Neosartorya fischeri (strain ATCC 1020 / DSM 3700 / CBS 544.65 / FGSC A1164 / JCM 1740 / NRRL 181 / WB 181) (Aspergillus fischerianus), this protein is Translation machinery-associated protein 22 (tma22).